A 105-amino-acid polypeptide reads, in one-letter code: Endogenous retrovirus group K member 6 Rec protein (105 aa).

A disordered region spans residues 1–49 (MNPSEMQRKAPPRRRRHRNRAPLTHKMNKMVTSEEQMKLPSTKKAEPPT). Residues 10-20 (APPRRRRHRNR) show a composition bias toward basic residues. The Nuclear localization signal motif lies at 13–20 (RRRRHRNR). A Nuclear export signal motif is present at residues 50-59 (WAQLKKLTQL).

In terms of assembly, forms homodimers, homotrimers, and homotetramers via a C-terminal domain. Associates with XPO1 and with ZNF145. Expressed at higher level in placenta, expressed at lower level in several organs and cell lines.

The protein resides in the cytoplasm. It localises to the nucleus. Its subcellular location is the nucleolus. Retroviral replication requires the nuclear export and translation of unspliced, singly-spliced and multiply-spliced derivatives of the initial genomic transcript. Rec interacts with a highly structured RNA element (RcRE) present in the viral 3'LTR and recruits the cellular nuclear export machinery. This permits export to the cytoplasm of unspliced genomic or incompletely spliced subgenomic viral transcripts. This Homo sapiens (Human) protein is Endogenous retrovirus group K member 6 Rec protein (ERVK-6).